Reading from the N-terminus, the 398-residue chain is Flavin-containing monooxygenase ustF1 (398 aa).

The first 22 residues, Met-1 to Thr-22, serve as a signal peptide directing secretion. Gly-13–Gly-18 lines the FAD pocket. Residues Asn-53, Asn-57, Asn-119, and Asn-126 are each glycosylated (N-linked (GlcNAc...) asparagine). Gly-194–Ser-199 is an NADP(+) binding site. Residues Asn-236, Asn-243, and Asn-271 are each glycosylated (N-linked (GlcNAc...) asparagine).

This sequence belongs to the FMO family.

Its pathway is mycotoxin biosynthesis. In terms of biological role, flavin-containing monooxygenase; part of the gene cluster that mediates the biosynthesis of the secondary metabolite ustiloxin B, an antimitotic tetrapeptide. First, ustA is processed by the subtilisin-like endoprotease Kex2 that is outside the ustiloxin B gene cluster, at the C-terminal side of Arg-Lys, after transfer to Golgi apparatus through the endoplasmic reticulum (ER). Cleavage by KEX2 generates 16 peptides YAIG-I to YAIG-XVI. To process the precursor peptide further, at least two peptidases are necessary to cleave the N-terminal and C-terminal sides of the Tyr-Ala-Ile-Gly core peptide which serves as backbone for the synthesis of ustiloxin B, through cyclization and modification of the tyrosine with a non-protein coding amino acid, norvaline. One of the two peptidases must be the serine peptidase ustP; and the other pepdidase is probably ustH. Macrocyclization of the core peptide derived from ustA requires the tyrosinase ustQ, as well as the homologous oxidases ustYa and ustYb, and leads to the production of the first cyclization product N-desmethylustiloxin F. For the formation of N-desmethylustiloxin F, three oxidation steps are required, hydroxylation at the benzylic position, hydroxylation at either the aromatic ring of Tyr or beta-position of Ile, and oxidative cyclization. UstQ may catalyze the oxidation of a phenol moiety, whereas the ustYa and ustYb are most likely responsible for the remaining two-step oxidations. N-desmethylustiloxin F is then methylated by ustM to yield ustiloxin F which in turn substrate of the cytochrome P450 monooxygenase ustC which catalyzes the formation of S-deoxyustiloxin H. The flavoprotein monooxygenases ustF1 and ustF2 then participate in the modification of the side chain of S-deoxyustiloxin H, leading to the synthesis of an oxime intermediate, via ustiloxin H. Finally, carboxylative dehydration performed by the cysteine desulfurase-like protein ustD yields ustiloxin B. This is Flavin-containing monooxygenase ustF1 from Aspergillus flavus (strain ATCC 200026 / FGSC A1120 / IAM 13836 / NRRL 3357 / JCM 12722 / SRRC 167).